The chain runs to 235 residues: Ubiquinone biosynthesis O-methyltransferase (235 aa).

Positions 40, 60, 81, and 125 each coordinate S-adenosyl-L-methionine.

It belongs to the methyltransferase superfamily. UbiG/COQ3 family.

The enzyme catalyses a 3-demethylubiquinol + S-adenosyl-L-methionine = a ubiquinol + S-adenosyl-L-homocysteine + H(+). It carries out the reaction a 3-(all-trans-polyprenyl)benzene-1,2-diol + S-adenosyl-L-methionine = a 2-methoxy-6-(all-trans-polyprenyl)phenol + S-adenosyl-L-homocysteine + H(+). Its pathway is cofactor biosynthesis; ubiquinone biosynthesis. Its function is as follows. O-methyltransferase that catalyzes the 2 O-methylation steps in the ubiquinone biosynthetic pathway. The chain is Ubiquinone biosynthesis O-methyltransferase from Nitrosomonas europaea (strain ATCC 19718 / CIP 103999 / KCTC 2705 / NBRC 14298).